Consider the following 320-residue polypeptide: Glutathione synthetase (320 aa).

Residues lysine 130–glutamate 315 form the ATP-grasp domain. Tryptophan 156–glycine 212 contributes to the ATP binding site. Mg(2+) contacts are provided by glutamate 286 and asparagine 288.

It belongs to the prokaryotic GSH synthase family. Mg(2+) serves as cofactor. It depends on Mn(2+) as a cofactor.

It catalyses the reaction gamma-L-glutamyl-L-cysteine + glycine + ATP = glutathione + ADP + phosphate + H(+). Its pathway is sulfur metabolism; glutathione biosynthesis; glutathione from L-cysteine and L-glutamate: step 2/2. In Buchnera aphidicola subsp. Schizaphis graminum (strain Sg), this protein is Glutathione synthetase.